The sequence spans 547 residues: Mercuric reductase (547 aa).

Positions 5–70 constitute an HMA domain; sequence APTELAITGM…AVVASGYGVH (66 aa). The a metal cation site is built by Cys-16 and Cys-19. FAD-binding residues include Ala-96 and Thr-121. The cysteines at positions 122 and 127 are disulfide-linked. FAD-binding residues include Lys-131, Ala-197, Asp-389, and Val-397. Residues Cys-544 and Cys-545 each coordinate Hg(2+).

Belongs to the class-I pyridine nucleotide-disulfide oxidoreductase family. As to quaternary structure, homodimer. The cofactor is FAD.

The catalysed reaction is Hg + NADP(+) + H(+) = Hg(2+) + NADPH. In terms of biological role, resistance to Hg(2+) in bacteria appears to be governed by a specialized system which includes mercuric reductase. MerA protein is responsible for volatilizing mercury as Hg(0). This Acidithiobacillus ferrooxidans (Thiobacillus ferrooxidans) protein is Mercuric reductase (merA).